A 190-amino-acid chain; its full sequence is Crossover junction endodeoxyribonuclease RuvC (190 aa).

Residues Asp-7, Glu-68, and Asp-141 contribute to the active site. Residues Asp-7, Glu-68, and Asp-141 each coordinate Mg(2+).

This sequence belongs to the RuvC family. Homodimer which binds Holliday junction (HJ) DNA. The HJ becomes 2-fold symmetrical on binding to RuvC with unstacked arms; it has a different conformation from HJ DNA in complex with RuvA. In the full resolvosome a probable DNA-RuvA(4)-RuvB(12)-RuvC(2) complex forms which resolves the HJ. Requires Mg(2+) as cofactor.

It localises to the cytoplasm. It catalyses the reaction Endonucleolytic cleavage at a junction such as a reciprocal single-stranded crossover between two homologous DNA duplexes (Holliday junction).. Its function is as follows. The RuvA-RuvB-RuvC complex processes Holliday junction (HJ) DNA during genetic recombination and DNA repair. Endonuclease that resolves HJ intermediates. Cleaves cruciform DNA by making single-stranded nicks across the HJ at symmetrical positions within the homologous arms, yielding a 5'-phosphate and a 3'-hydroxyl group; requires a central core of homology in the junction. The consensus cleavage sequence is 5'-(A/T)TT(C/G)-3'. Cleavage occurs on the 3'-side of the TT dinucleotide at the point of strand exchange. HJ branch migration catalyzed by RuvA-RuvB allows RuvC to scan DNA until it finds its consensus sequence, where it cleaves and resolves the cruciform DNA. In Endomicrobium trichonymphae, this protein is Crossover junction endodeoxyribonuclease RuvC.